A 453-amino-acid chain; its full sequence is Cysteine--tRNA ligase (453 aa).

Zn(2+) is bound at residue Cys30. Residues 32 to 42 carry the 'HIGH' region motif; the sequence is PTVYDRAHLGN. Cys212, His237, and Glu241 together coordinate Zn(2+). Positions 268 to 272 match the 'KMSKS' region motif; it reads KMSKS. Lys271 provides a ligand contact to ATP.

It belongs to the class-I aminoacyl-tRNA synthetase family. Monomer. Zn(2+) serves as cofactor.

The protein localises to the cytoplasm. It carries out the reaction tRNA(Cys) + L-cysteine + ATP = L-cysteinyl-tRNA(Cys) + AMP + diphosphate. The sequence is that of Cysteine--tRNA ligase from Jannaschia sp. (strain CCS1).